The following is a 163-amino-acid chain: Small ribosomal subunit protein uS5 (163 aa).

Residues F8–I71 enclose the S5 DRBM domain.

It belongs to the universal ribosomal protein uS5 family. Part of the 30S ribosomal subunit. Contacts proteins S4 and S8.

Its function is as follows. With S4 and S12 plays an important role in translational accuracy. Functionally, located at the back of the 30S subunit body where it stabilizes the conformation of the head with respect to the body. The polypeptide is Small ribosomal subunit protein uS5 (Lawsonia intracellularis (strain PHE/MN1-00)).